A 93-amino-acid polypeptide reads, in one-letter code: Small ribosomal subunit protein uS17 (93 aa).

This sequence belongs to the universal ribosomal protein uS17 family. Part of the 30S ribosomal subunit.

Functionally, one of the primary rRNA binding proteins, it binds specifically to the 5'-end of 16S ribosomal RNA. In Rhodococcus erythropolis (strain PR4 / NBRC 100887), this protein is Small ribosomal subunit protein uS17.